We begin with the raw amino-acid sequence, 562 residues long: Potassium-transporting ATPase potassium-binding subunit (562 aa).

12 consecutive transmembrane segments (helical) span residues 6-26 (FLLI…LGGF), 62-82 (YALA…VLLM), 132-152 (GLTV…FALI), 175-195 (LYVL…QGVL), 253-273 (FVQM…FGQV), 283-303 (LIWA…YAEL), 327-347 (FGIL…CGAV), 356-376 (ALGG…FGGV), 379-399 (GLYG…LMIG), 416-436 (MTAL…ALAL), 483-503 (LLLA…VLAI), and 526-546 (LFIG…FIPA).

It belongs to the KdpA family. In terms of assembly, the system is composed of three essential subunits: KdpA, KdpB and KdpC.

It is found in the cell inner membrane. Functionally, part of the high-affinity ATP-driven potassium transport (or Kdp) system, which catalyzes the hydrolysis of ATP coupled with the electrogenic transport of potassium into the cytoplasm. This subunit binds the periplasmic potassium ions and delivers the ions to the membrane domain of KdpB through an intramembrane tunnel. This chain is Potassium-transporting ATPase potassium-binding subunit, found in Yersinia pseudotuberculosis serotype I (strain IP32953).